The sequence spans 83 residues: Small ribosomal subunit protein bS16 (83 aa).

The protein belongs to the bacterial ribosomal protein bS16 family.

The polypeptide is Small ribosomal subunit protein bS16 (Pseudomonas aeruginosa (strain LESB58)).